The primary structure comprises 499 residues: Serine carboxypeptidase-like 34 (499 aa).

An N-terminal signal peptide occupies residues Met1–Ala25. Asn73, Asn124, and Asn158 each carry an N-linked (GlcNAc...) asparagine glycan. 3 disulfides stabilise this stretch: Cys106-Cys383, Cys269-Cys280, and Cys304-Cys351. The active site involves Ser200. Asn310, Asn372, and Asn375 each carry an N-linked (GlcNAc...) asparagine glycan. Residues Asp419 and His471 contribute to the active site.

Belongs to the peptidase S10 family. In terms of tissue distribution, ubiquitous.

The protein resides in the secreted. Probable carboxypeptidase. This chain is Serine carboxypeptidase-like 34 (SCPL34), found in Arabidopsis thaliana (Mouse-ear cress).